The sequence spans 49 residues: Light-harvesting protein B-875 beta chain (49 aa).

The Cytoplasmic portion of the chain corresponds to 2-27 (ADKSDLGYTGLTDEQAQELHSVYMSG). Residues histidine 21 and histidine 39 each coordinate a bacteriochlorophyll. Residues 28-45 (LWPFSAVAIVAHLAVYIW) form a helical; Signal-anchor for type II membrane protein membrane-spanning segment. Residues 46 to 49 (RPWF) lie on the Periplasmic side of the membrane.

The protein belongs to the antenna complex beta subunit family. In terms of assembly, the core complex is formed by different alpha and beta chains, binding bacteriochlorophyll molecules, and arranged most probably in tetrameric structures disposed around the reaction center. The non-pigmented gamma chains may constitute additional components.

It is found in the cell inner membrane. In terms of biological role, antenna complexes are light-harvesting systems, which transfer the excitation energy to the reaction centers. This chain is Light-harvesting protein B-875 beta chain (pufB), found in Cereibacter sphaeroides (Rhodobacter sphaeroides).